An 87-amino-acid chain; its full sequence is Small ribosomal subunit protein bS20 (87 aa).

This sequence belongs to the bacterial ribosomal protein bS20 family.

Binds directly to 16S ribosomal RNA. The sequence is that of Small ribosomal subunit protein bS20 from Neorickettsia sennetsu (strain ATCC VR-367 / Miyayama) (Ehrlichia sennetsu).